The chain runs to 514 residues: 2,3-bisphosphoglycerate-independent phosphoglycerate mutase (514 aa).

2 residues coordinate Mn(2+): D14 and S64. The active-site Phosphoserine intermediate is the S64. Substrate contacts are provided by residues H125, 155 to 156 (RD), R187, R193, 263 to 266 (RADR), and K336. Positions 403, 407, 444, 445, and 463 each coordinate Mn(2+).

This sequence belongs to the BPG-independent phosphoglycerate mutase family. As to quaternary structure, monomer. It depends on Mn(2+) as a cofactor.

It carries out the reaction (2R)-2-phosphoglycerate = (2R)-3-phosphoglycerate. It participates in carbohydrate degradation; glycolysis; pyruvate from D-glyceraldehyde 3-phosphate: step 3/5. Functionally, catalyzes the interconversion of 2-phosphoglycerate and 3-phosphoglycerate. In Shewanella denitrificans (strain OS217 / ATCC BAA-1090 / DSM 15013), this protein is 2,3-bisphosphoglycerate-independent phosphoglycerate mutase.